Consider the following 698-residue polypeptide: Putative transposon gamma-delta 80.3 kDa protein (698 aa).

The protein is Putative transposon gamma-delta 80.3 kDa protein (tnpX) of Escherichia coli (strain K12).